The sequence spans 468 residues: Probable Xaa-Pro aminopeptidase PEPP (468 aa).

Mn(2+) contacts are provided by Asp264, Asp275, Glu398, and Glu438.

The protein belongs to the peptidase M24B family. Requires Mn(2+) as cofactor.

It catalyses the reaction Release of any N-terminal amino acid, including proline, that is linked to proline, even from a dipeptide or tripeptide.. Functionally, catalyzes the removal of a penultimate prolyl residue from the N-termini of peptides. This chain is Probable Xaa-Pro aminopeptidase PEPP (PEPP), found in Paracoccidioides lutzii (strain ATCC MYA-826 / Pb01) (Paracoccidioides brasiliensis).